Consider the following 608-residue polypeptide: Bifunctional dihydrofolate reductase-thymidylate synthase (608 aa).

Residues 10–228 enclose the DHFR domain; sequence DIYAICACCK…TTLDFIIYKK (219 aa). 14–15 serves as a coordination point for substrate; the sequence is IC. Ala-16 serves as a coordination point for NADP(+). Val-31 is a binding site for substrate. 39-45 is an NADP(+) binding site; sequence GLGNKGV. Substrate contacts are provided by Asp-54 and Asn-108. NADP(+) contacts are provided by residues 106–108, 128–130, and Asn-144; these read RTN and SRT. Positions 164, 170, and 185 each coordinate substrate. 165–172 lines the NADP(+) pocket; that stretch reads GGSVVYQE. Residues 322 to 608 are thymidylate synthase; sequence YHPEYQYLNI…HEKISMDMAA (287 aa). Arg-345 contributes to the dUMP binding site. Cys-490 is a catalytic residue. Residues His-491, 509-513, Asn-521, and 551-553 contribute to the dUMP site; these read QRSCD and HVY.

This sequence in the N-terminal section; belongs to the dihydrofolate reductase family. It in the C-terminal section; belongs to the thymidylate synthase family. As to quaternary structure, homodimer.

It carries out the reaction (6S)-5,6,7,8-tetrahydrofolate + NADP(+) = 7,8-dihydrofolate + NADPH + H(+). It catalyses the reaction dUMP + (6R)-5,10-methylene-5,6,7,8-tetrahydrofolate = 7,8-dihydrofolate + dTMP. It participates in cofactor biosynthesis; tetrahydrofolate biosynthesis; 5,6,7,8-tetrahydrofolate from 7,8-dihydrofolate: step 1/1. Its function is as follows. Bifunctional enzyme. Involved in de novo dTMP biosynthesis. Key enzyme in folate metabolism. Catalyzes an essential reaction for de novo glycine and purine synthesis, DNA precursor synthesis, and for the conversion of dUMP to dTMP. The chain is Bifunctional dihydrofolate reductase-thymidylate synthase from Plasmodium falciparum (isolate K1 / Thailand).